Reading from the N-terminus, the 372-residue chain is MTQSRRMLVLRAVVEDYIRSQEPVGSTSLTRDHDLGVSSATIRNDMAALEDEGYLIQPHTSAGRVPTEKGYRYFVDRLATVVPLSEAQRRGINSFLSGSVSLKDALQRSARLLSEITGQVAVVTSPSLAKATLRHVEMVPVAMTTLLAVVITDTGRVAQHGLTIASMPAVDEINRLSNTVNEQCVGLSLSKSAETVRSIAASAGYESVRGVADALADAFESMALDERANELYMSGTSHLAHSRSLTDLAPLFDALEEQVVLMKLMSNLSEETNASGVGVAIGSEMHTPGLLHASVVSSGYGRSGEAGEPAGNDPVGEPETESETESQTNDMEPIAFVGSIGPTHMDYAATMAAVRAVARYLTAFLSEGRTQD.

A disordered region spans residues 296–331 (VSSGYGRSGEAGEPAGNDPVGEPETESETESQTNDM).

The protein belongs to the HrcA family.

Its function is as follows. Negative regulator of class I heat shock genes (grpE-dnaK-dnaJ and groELS operons). Prevents heat-shock induction of these operons. In Bifidobacterium longum subsp. infantis (strain ATCC 15697 / DSM 20088 / JCM 1222 / NCTC 11817 / S12), this protein is Heat-inducible transcription repressor HrcA.